The chain runs to 337 residues: DNA-directed RNA polymerase subunit alpha (337 aa).

The segment at 1–233 (MVREEVTIST…NLFIPFLHAE (233 aa)) is alpha N-terminal domain (alpha-NTD). The interval 266 to 337 (GIALKCIFID…FAMNLPKDFF (72 aa)) is alpha C-terminal domain (alpha-CTD).

This sequence belongs to the RNA polymerase alpha chain family. In terms of assembly, in plastids the minimal PEP RNA polymerase catalytic core is composed of four subunits: alpha, beta, beta', and beta''. When a (nuclear-encoded) sigma factor is associated with the core the holoenzyme is formed, which can initiate transcription.

Its subcellular location is the plastid. It is found in the chloroplast. It catalyses the reaction RNA(n) + a ribonucleoside 5'-triphosphate = RNA(n+1) + diphosphate. In terms of biological role, DNA-dependent RNA polymerase catalyzes the transcription of DNA into RNA using the four ribonucleoside triphosphates as substrates. This Ceratophyllum demersum (Rigid hornwort) protein is DNA-directed RNA polymerase subunit alpha.